The following is a 331-amino-acid chain: 5,10-methylenetetrahydromethanopterin reductase (331 aa).

It belongs to the mer family.

Its subcellular location is the cytoplasm. It catalyses the reaction 5-methyl-5,6,7,8-tetrahydromethanopterin + oxidized coenzyme F420-(gamma-L-Glu)(n) + H(+) = 5,10-methylenetetrahydromethanopterin + reduced coenzyme F420-(gamma-L-Glu)(n). Its pathway is one-carbon metabolism; methanogenesis from CO(2); methyl-coenzyme M from 5,10-methylene-5,6,7,8-tetrahydromethanopterin: step 1/2. In terms of biological role, catalyzes the reversible reduction of methylene-H(4)MPT to methyl-H(4)MPT. The chain is 5,10-methylenetetrahydromethanopterin reductase from Methanocaldococcus jannaschii (strain ATCC 43067 / DSM 2661 / JAL-1 / JCM 10045 / NBRC 100440) (Methanococcus jannaschii).